A 70-amino-acid polypeptide reads, in one-letter code: Brevinin-1S (70 aa).

Positions 1–22 (MFTLKKSLLLLFFLGTINLSLC) are cleaved as a signal peptide. The propeptide occupies 23 to 44 (EEERNAEEERRDDPEERDVEVE). Cysteines 64 and 70 form a disulfide.

Belongs to the frog skin active peptide (FSAP) family. Brevinin subfamily. As to expression, expressed by the skin glands.

Its subcellular location is the secreted. In terms of biological role, antimicrobial peptide. This is Brevinin-1S from Odorrana schmackeri (Schmacker's frog).